We begin with the raw amino-acid sequence, 188 residues long: UPF0200 protein M164_1169 (188 aa).

15-22 (GMPGSGKS) contacts ATP.

This sequence belongs to the UPF0200 family.

The protein is UPF0200 protein M164_1169 of Saccharolobus islandicus (strain M.16.4 / Kamchatka #3) (Sulfolobus islandicus).